Reading from the N-terminus, the 449-residue chain is Bifunctional protein GlmU (449 aa).

Residues 1-230 (MASSKLAVIV…EAELLGVNAR (230 aa)) are pyrophosphorylase. Residues 11–14 (LAAG), K25, Q74, 79–80 (GT), 102–104 (YGD), G142, E156, N171, and N228 each bind UDP-N-acetyl-alpha-D-glucosamine. D104 lines the Mg(2+) pocket. N228 contributes to the Mg(2+) binding site. The segment at 231-251 (SELAVAEALVQARLREAAMDN) is linker. Residues 252-449 (GATLIDPATV…QQAAKKAKKD (198 aa)) are N-acetyltransferase. UDP-N-acetyl-alpha-D-glucosamine is bound by residues R317 and K335. H347 functions as the Proton acceptor in the catalytic mechanism. UDP-N-acetyl-alpha-D-glucosamine is bound by residues Y350 and N361. Residues A364, 370–371 (NY), S389, A407, and R424 contribute to the acetyl-CoA site.

In the N-terminal section; belongs to the N-acetylglucosamine-1-phosphate uridyltransferase family. This sequence in the C-terminal section; belongs to the transferase hexapeptide repeat family. In terms of assembly, homotrimer. The cofactor is Mg(2+).

The protein resides in the cytoplasm. It catalyses the reaction alpha-D-glucosamine 1-phosphate + acetyl-CoA = N-acetyl-alpha-D-glucosamine 1-phosphate + CoA + H(+). The enzyme catalyses N-acetyl-alpha-D-glucosamine 1-phosphate + UTP + H(+) = UDP-N-acetyl-alpha-D-glucosamine + diphosphate. The protein operates within nucleotide-sugar biosynthesis; UDP-N-acetyl-alpha-D-glucosamine biosynthesis; N-acetyl-alpha-D-glucosamine 1-phosphate from alpha-D-glucosamine 6-phosphate (route II): step 2/2. It participates in nucleotide-sugar biosynthesis; UDP-N-acetyl-alpha-D-glucosamine biosynthesis; UDP-N-acetyl-alpha-D-glucosamine from N-acetyl-alpha-D-glucosamine 1-phosphate: step 1/1. Its pathway is bacterial outer membrane biogenesis; LPS lipid A biosynthesis. Its function is as follows. Catalyzes the last two sequential reactions in the de novo biosynthetic pathway for UDP-N-acetylglucosamine (UDP-GlcNAc). The C-terminal domain catalyzes the transfer of acetyl group from acetyl coenzyme A to glucosamine-1-phosphate (GlcN-1-P) to produce N-acetylglucosamine-1-phosphate (GlcNAc-1-P), which is converted into UDP-GlcNAc by the transfer of uridine 5-monophosphate (from uridine 5-triphosphate), a reaction catalyzed by the N-terminal domain. This is Bifunctional protein GlmU from Paramagnetospirillum magneticum (strain ATCC 700264 / AMB-1) (Magnetospirillum magneticum).